Consider the following 263-residue polypeptide: Acetylglutamate kinase (263 aa).

Substrate is bound by residues 48–49 (GG), Arg-70, and Asn-162.

It belongs to the acetylglutamate kinase family. ArgB subfamily.

Its subcellular location is the cytoplasm. It catalyses the reaction N-acetyl-L-glutamate + ATP = N-acetyl-L-glutamyl 5-phosphate + ADP. It functions in the pathway amino-acid biosynthesis; L-arginine biosynthesis; N(2)-acetyl-L-ornithine from L-glutamate: step 2/4. Its function is as follows. Catalyzes the ATP-dependent phosphorylation of N-acetyl-L-glutamate. The polypeptide is Acetylglutamate kinase (Vibrio vulnificus (strain YJ016)).